The sequence spans 190 residues: Putative manganese efflux pump MntP (190 aa).

A run of 5 helical transmembrane segments spans residues 37–57, 64–84, 111–131, 135–155, and 164–184; these read LILA…GWGI, LSFI…GVGA, LILG…MAFV, IITL…VGAW, and FGGW…GNIL.

The protein belongs to the MntP (TC 9.B.29) family.

Its subcellular location is the cell membrane. Functionally, probably functions as a manganese efflux pump. This is Putative manganese efflux pump MntP from Corynebacterium efficiens (strain DSM 44549 / YS-314 / AJ 12310 / JCM 11189 / NBRC 100395).